The chain runs to 491 residues: Cytochrome P450 2B4 (491 aa).

A Phosphoserine; by PKA modification is found at Ser-128. Residue Cys-436 coordinates heme.

This sequence belongs to the cytochrome P450 family. The cofactor is heme.

It localises to the endoplasmic reticulum membrane. The protein localises to the microsome membrane. It carries out the reaction an organic molecule + reduced [NADPH--hemoprotein reductase] + O2 = an alcohol + oxidized [NADPH--hemoprotein reductase] + H2O + H(+). Functionally, cytochromes P450 are a group of heme-thiolate monooxygenases. In liver microsomes, this enzyme is involved in an NADPH-dependent electron transport pathway. It oxidizes a variety of structurally unrelated compounds, including steroids, fatty acids, and xenobiotics. In the epoxidation of arachidonic acid it has a unique preference for the 5,6-olefin. The chain is Cytochrome P450 2B4 (CYP2B4) from Oryctolagus cuniculus (Rabbit).